The chain runs to 167 residues: Translationally-controlled tumor protein homolog (167 aa).

The region spanning 1 to 167 (MIIYKDIFSG…WKHGIDEEKI (167 aa)) is the TCTP domain.

It belongs to the TCTP family.

It localises to the cytoplasm. Its subcellular location is the cytoskeleton. Functionally, involved in protein synthesis. Involved in microtubule stabilization. This is Translationally-controlled tumor protein homolog from Candida glabrata (strain ATCC 2001 / BCRC 20586 / JCM 3761 / NBRC 0622 / NRRL Y-65 / CBS 138) (Yeast).